We begin with the raw amino-acid sequence, 621 residues long: Archaeal Lon protease (621 aa).

Residues 1-117 (MNEEVREILG…YKEEAMKKAQ (117 aa)) lie on the Cytoplasmic side of the membrane. 54 to 61 (GSPGTGKS) contributes to the ATP binding site. The chain crosses the membrane as a helical span at residues 118–136 (ARNFLIFTLVFLVIGYTVL). Topologically, residues 137–141 (TNPGN) are extracellular. Residues 142–160 (LIWGIIAAVLILMMSRYFI) traverse the membrane as a helical segment. At 161 to 621 (PREDRNVPKL…KFKELELAAV (461 aa)) the chain is on the cytoplasmic side. The Lon proteolytic domain occupies 423–602 (GYEVGRVNGL…NEVLEHVLED (180 aa)). Residues serine 509 and lysine 552 contribute to the active site.

Belongs to the peptidase S16 family. Archaeal LonB subfamily. In terms of assembly, homohexamer. Organized in a ring with a central cavity.

It localises to the cell membrane. Functionally, ATP-dependent serine protease that mediates the selective degradation of mutant and abnormal proteins as well as certain short-lived regulatory proteins. Degrades polypeptides processively. The polypeptide is Archaeal Lon protease (Archaeoglobus fulgidus (strain ATCC 49558 / DSM 4304 / JCM 9628 / NBRC 100126 / VC-16)).